Here is a 1163-residue protein sequence, read N- to C-terminus: Integrin alpha-X (1163 aa).

An N-terminal signal peptide occupies residues 1–19 (MTRTRAALLLFTALATSLG). Topologically, residues 20 to 1107 (FNLDTEELTA…EKYKVHNPTP (1088 aa)) are extracellular. 2 FG-GAP repeats span residues 23 to 78 (DTEE…ACEP) and 79 to 138 (IGLQ…TQRL). N-linked (GlcNAc...) asparagine glycosylation is present at N61. A disulfide bridge links C69 with C76. A glycan (N-linked (GlcNAc...) asparagine) is linked at N89. Cystine bridges form between C108–C126 and C116–C145. The Mg(2+) site is built by D157, S159, S161, and D259. The VWFA domain maps to 165–339 (RNFATMMNFV…KEKIFAIEGT (175 aa)). FG-GAP repeat units lie at residues 340–391 (ETTS…PTFI), 392–443 (NMSQ…SRQW), 444–504 (RMKA…WRRW), 507–565 (DAVL…PSIS), and 570–630 (QRIA…FIPA). The N-linked (GlcNAc...) asparagine glycan is linked to N392. 4 residues coordinate Ca(2+): D466, D468, D470, and D474. C495 and C506 form a disulfide bridge. Ca(2+) contacts are provided by D530, N532, D534, D538, D593, D597, and D601. Intrachain disulfides connect C639-C722 and C655-C712. Residues N697 and N735 are each glycosylated (N-linked (GlcNAc...) asparagine). Disulfide bonds link C771-C777 and C848-C863. Residues N899 and N939 are each glycosylated (N-linked (GlcNAc...) asparagine). Cystine bridges form between C998-C1022 and C1027-C1032. N1050 carries N-linked (GlcNAc...) asparagine glycosylation. A helical membrane pass occupies residues 1108-1128 (LIVGSSIGGLLLLALITAVLY). Residues 1129-1163 (KVGFFKRQYKEMMEEANGQIAPENGTQTPSPPSEK) are Cytoplasmic-facing. A GFFKR motif motif is present at residues 1131–1135 (GFFKR).

This sequence belongs to the integrin alpha chain family. In terms of assembly, heterodimer of an alpha and a beta subunit. Alpha-X associates with beta-2. As to expression, predominantly expressed in monocytes and granulocytes.

The protein resides in the membrane. In terms of biological role, integrin alpha-X/beta-2 is a receptor for fibrinogen. It recognizes the sequence G-P-R in fibrinogen. It mediates cell-cell interaction during inflammatory responses. It is especially important in monocyte adhesion and chemotaxis. The sequence is that of Integrin alpha-X (ITGAX) from Homo sapiens (Human).